A 223-amino-acid polypeptide reads, in one-letter code: Small ribosomal subunit protein uS3 (223 aa).

One can recognise a KH type-2 domain in the interval 39-107 (VREFLKQKLK…PVQVSVEEIR (69 aa)).

The protein belongs to the universal ribosomal protein uS3 family. As to quaternary structure, part of the 30S ribosomal subunit. Forms a tight complex with proteins S10 and S14.

Functionally, binds the lower part of the 30S subunit head. Binds mRNA in the 70S ribosome, positioning it for translation. The polypeptide is Small ribosomal subunit protein uS3 (Methylococcus capsulatus (strain ATCC 33009 / NCIMB 11132 / Bath)).